The chain runs to 164 residues: Transcription elongation factor GreA (164 aa).

Residues 15 to 76 (DRLKNELDQL…LQELLNSAKV (62 aa)) are a coiled coil.

Belongs to the GreA/GreB family.

Its function is as follows. Necessary for efficient RNA polymerase transcription elongation past template-encoded arresting sites. The arresting sites in DNA have the property of trapping a certain fraction of elongating RNA polymerases that pass through, resulting in locked ternary complexes. Cleavage of the nascent transcript by cleavage factors such as GreA or GreB allows the resumption of elongation from the new 3'terminus. GreA releases sequences of 2 to 3 nucleotides. The polypeptide is Transcription elongation factor GreA (Rhodococcus erythropolis (strain PR4 / NBRC 100887)).